The chain runs to 83 residues: Bublin coiled-coil protein (83 aa).

The segment at 1-25 is disordered; sequence MSGPNGDLGTPVEAGAEGEEDGFGE. Positions 25–74 form a coiled coil; the sequence is EAEYAAINSMLDQINSCLDHLEEKNDHLHARLQELLESNRQTRLEFQQQL. Ser-82 carries the phosphoserine modification.

The protein belongs to the UPF0184 (EST00098) family.

The protein resides in the cell junction. It localises to the cytoplasm. Its subcellular location is the cytoskeleton. Its function is as follows. Essential for intermediate filament organization in intestinal cells, interacts with intermediate filament and regulates intestinal lumen morphology. This is Bublin coiled-coil protein (BBLN) from Bos taurus (Bovine).